Reading from the N-terminus, the 181-residue chain is PLAT domain-containing protein 1 (181 aa).

An N-terminal signal peptide occupies residues M1–L14. Residue A15 is modified to N-acetylalanine. The PLAT domain maps to C29–N156.

Expressed in root tips, pericycle cells, lateral root primordia, stomata, leaf vasculature, hydathodes and floral organs.

Its subcellular location is the endoplasmic reticulum. It is found in the plastid. The protein localises to the chloroplast. The protein resides in the plastoglobule. Its function is as follows. Positive regulator of abiotic stress tolerance involved in the regulation of plant growth. May be a downstream target of the abscisic acid (ABA) signaling pathway. This Arabidopsis thaliana (Mouse-ear cress) protein is PLAT domain-containing protein 1.